The following is a 210-amino-acid chain: Large ribosomal subunit protein uL4 (210 aa).

It belongs to the universal ribosomal protein uL4 family. As to quaternary structure, part of the 50S ribosomal subunit.

Its function is as follows. One of the primary rRNA binding proteins, this protein initially binds near the 5'-end of the 23S rRNA. It is important during the early stages of 50S assembly. It makes multiple contacts with different domains of the 23S rRNA in the assembled 50S subunit and ribosome. In terms of biological role, forms part of the polypeptide exit tunnel. The polypeptide is Large ribosomal subunit protein uL4 (rplD) (Thermus thermophilus).